The chain runs to 481 residues: Ribulose bisphosphate carboxylase large chain (481 aa).

Residues 1 to 2 (MS) constitute a propeptide that is removed on maturation. Residue Pro-3 is modified to N-acetylproline. An N6,N6,N6-trimethyllysine modification is found at Lys-14. Substrate contacts are provided by Asn-123 and Thr-173. Lys-175 acts as the Proton acceptor in catalysis. Lys-177 contributes to the substrate binding site. Lys-201, Asp-203, and Glu-204 together coordinate Mg(2+). N6-carboxylysine is present on Lys-201. His-294 acts as the Proton acceptor in catalysis. Positions 295, 327, and 379 each coordinate substrate.

This sequence belongs to the RuBisCO large chain family. Type I subfamily. Heterohexadecamer of 8 large chains and 8 small chains; disulfide-linked. The disulfide link is formed within the large subunit homodimers. It depends on Mg(2+) as a cofactor. In terms of processing, the disulfide bond which can form in the large chain dimeric partners within the hexadecamer appears to be associated with oxidative stress and protein turnover.

Its subcellular location is the plastid. The protein localises to the chloroplast. It carries out the reaction 2 (2R)-3-phosphoglycerate + 2 H(+) = D-ribulose 1,5-bisphosphate + CO2 + H2O. The catalysed reaction is D-ribulose 1,5-bisphosphate + O2 = 2-phosphoglycolate + (2R)-3-phosphoglycerate + 2 H(+). Its function is as follows. RuBisCO catalyzes two reactions: the carboxylation of D-ribulose 1,5-bisphosphate, the primary event in carbon dioxide fixation, as well as the oxidative fragmentation of the pentose substrate in the photorespiration process. Both reactions occur simultaneously and in competition at the same active site. The chain is Ribulose bisphosphate carboxylase large chain from Coffea arabica (Arabian coffee).